The sequence spans 124 residues: Kalata-B1 (124 aa).

The signal sequence occupies residues 1–22; the sequence is MAKFTVCLLLCLLLAAFVGAFG. A propeptide spanning residues 23-88 is cleaved from the precursor; the sequence is SELSDSHKTT…QVFLKQLQLK (66 aa). A cross-link (cyclopeptide (Gly-Asn)) is located at residues 89–117; the sequence is GLPVCGETCVGGTCNTPGCTCSWPVCTRN. Cystine bridges form between cysteine 93/cysteine 107, cysteine 97/cysteine 109, and cysteine 102/cysteine 114. The propeptide occupies 118–124; the sequence is GLPSLAA.

The protein belongs to the cyclotide family. Moebius subfamily. In terms of processing, kalata-B1 is a cyclic peptide which occurs in three forms: with unmodified Trp-111, with Trp-111 oxidized to form oxindolylalanine and with Trp-111 oxidized to form N-formylkynurenine. Oxidation is enhanced by exposure to sunlight. As to expression, leaves and stems. Lower in roots.

In terms of biological role, probably participates in a plant defense mechanism. Has antibiotic activity. Has a diuretic effect. Has a uterotonic effect in humans. Active against the Gram-positive S.aureus with a minimum inhibition concentration of approximately 0.2 microM. Relatively ineffective against Gram-negative bacteria such as E.coli and P.aeruginosa. Inhibitory effect on the growth and development of larvae from H.punctigera. The unmodified form has hemolytic activity, the oxidized form lacks hemolytic activity. If the protein is linearized, hemolytic activity is lost. This Oldenlandia affinis protein is Kalata-B1 (OAK1).